Reading from the N-terminus, the 328-residue chain is DNA-directed RNA polymerase subunit alpha (328 aa).

Positions 1–231 are alpha N-terminal domain (alpha-NTD); sequence MIYQMQMPEK…EHVSLFANFS (231 aa). An alpha C-terminal domain (alpha-CTD) region spans residues 252-328; that stretch reads MRKMLLTRIE…MDITKYQMKG (77 aa).

It belongs to the RNA polymerase alpha chain family. Homodimer. The RNAP catalytic core consists of 2 alpha, 1 beta, 1 beta' and 1 omega subunit. When a sigma factor is associated with the core the holoenzyme is formed, which can initiate transcription.

The catalysed reaction is RNA(n) + a ribonucleoside 5'-triphosphate = RNA(n+1) + diphosphate. Its function is as follows. DNA-dependent RNA polymerase catalyzes the transcription of DNA into RNA using the four ribonucleoside triphosphates as substrates. The chain is DNA-directed RNA polymerase subunit alpha from Chlorobium phaeobacteroides (strain BS1).